The chain runs to 279 residues: MAAPVRRTLLGVAGGWRRFERLWAGSLSSRSLALAAAPSSNGSPWRLLGALCLQRPPVVSKPLTPLQEEMASLLQQIEIERSLYSDHELRALDENQRLAKKKADLHDEEDEQDILLAQDLEDMWEQKFLQFKLGARITEADEKNDRTSLNRKLDRNLVLLVREKFGDQDVWILPQAEWQPGETLRGTAERTLATLSENNMEAKFLGNAPCGHYTFKFPQAMRTESNLGAKVFFFKALLLTGDFSQAGNKGHHVWVTKDELGDYLKPKYLAQVRRFVSDL.

Lysine 230 carries the post-translational modification N6-acetyllysine.

Belongs to the mitochondrion-specific ribosomal protein mL46 family. Component of the mitochondrial large ribosomal subunit (mt-LSU). Mature mammalian 55S mitochondrial ribosomes consist of a small (28S) and a large (39S) subunit. The 28S small subunit contains a 12S ribosomal RNA (12S mt-rRNA) and 30 different proteins. The 39S large subunit contains a 16S rRNA (16S mt-rRNA), a copy of mitochondrial valine transfer RNA (mt-tRNA(Val)), which plays an integral structural role, and 52 different proteins. mL46 is located at the central protuberance.

The protein resides in the mitochondrion. The chain is Large ribosomal subunit protein mL46 (MRPL46) from Homo sapiens (Human).